The chain runs to 393 residues: Lipid-A-disaccharide synthase (393 aa).

The protein belongs to the LpxB family.

The catalysed reaction is a lipid X + a UDP-2-N,3-O-bis[(3R)-3-hydroxyacyl]-alpha-D-glucosamine = a lipid A disaccharide + UDP + H(+). It functions in the pathway bacterial outer membrane biogenesis; LPS lipid A biosynthesis. Its function is as follows. Condensation of UDP-2,3-diacylglucosamine and 2,3-diacylglucosamine-1-phosphate to form lipid A disaccharide, a precursor of lipid A, a phosphorylated glycolipid that anchors the lipopolysaccharide to the outer membrane of the cell. The sequence is that of Lipid-A-disaccharide synthase from Actinobacillus pleuropneumoniae serotype 7 (strain AP76).